The following is a 179-amino-acid chain: ATP-dependent protease subunit HslV (179 aa).

Thr7 is an active-site residue. Positions 162, 165, and 168 each coordinate Na(+).

Belongs to the peptidase T1B family. HslV subfamily. A double ring-shaped homohexamer of HslV is capped on each side by a ring-shaped HslU homohexamer. The assembly of the HslU/HslV complex is dependent on binding of ATP.

It is found in the cytoplasm. It carries out the reaction ATP-dependent cleavage of peptide bonds with broad specificity.. Its activity is regulated as follows. Allosterically activated by HslU binding. In terms of biological role, protease subunit of a proteasome-like degradation complex believed to be a general protein degrading machinery. The polypeptide is ATP-dependent protease subunit HslV (Bordetella bronchiseptica (strain ATCC BAA-588 / NCTC 13252 / RB50) (Alcaligenes bronchisepticus)).